The following is a 441-amino-acid chain: POC1 centriolar protein homolog A (441 aa).

WD repeat units follow at residues G16–R55, G58–V97, A100–S139, Q142–S181, E184–H223, V226–T265, and G268–A307. The tract at residues D323 to D380 is disordered. Basic and acidic residues-rich tracts occupy residues A331 to A340, L348 to S361, and I371 to D380. Residues L400 to A427 are a coiled coil.

This sequence belongs to the WD repeat POC1 family. As to quaternary structure, interacts with pat.

It localises to the cytoplasm. It is found in the cytoskeleton. May play an important role in centriole assembly and/or stability and ciliogenesis. The polypeptide is POC1 centriolar protein homolog A (poc1a) (Xenopus tropicalis (Western clawed frog)).